The chain runs to 197 residues: NADH-quinone oxidoreductase subunit B (197 aa).

[4Fe-4S] cluster is bound by residues cysteine 63, cysteine 64, cysteine 129, and cysteine 159.

The protein belongs to the complex I 20 kDa subunit family. In terms of assembly, NDH-1 is composed of 14 different subunits. Subunits NuoB, C, D, E, F, and G constitute the peripheral sector of the complex. [4Fe-4S] cluster serves as cofactor.

It is found in the cell inner membrane. The catalysed reaction is a quinone + NADH + 5 H(+)(in) = a quinol + NAD(+) + 4 H(+)(out). Functionally, NDH-1 shuttles electrons from NADH, via FMN and iron-sulfur (Fe-S) centers, to quinones in the respiratory chain. The immediate electron acceptor for the enzyme in this species is believed to be a menaquinone. Couples the redox reaction to proton translocation (for every two electrons transferred, four hydrogen ions are translocated across the cytoplasmic membrane), and thus conserves the redox energy in a proton gradient. The chain is NADH-quinone oxidoreductase subunit B from Bacteroides thetaiotaomicron (strain ATCC 29148 / DSM 2079 / JCM 5827 / CCUG 10774 / NCTC 10582 / VPI-5482 / E50).